The sequence spans 861 residues: Probable beta-glucosidase A (861 aa).

A signal peptide spans 1–19 (MKLSILEAAALTAASVASA). 3 N-linked (GlcNAc...) asparagine glycosylation sites follow: N62, N212, and N253. The active site involves D281. Residues N316, N323, N355, N524, N543, N565, N669, and N713 are each glycosylated (N-linked (GlcNAc...) asparagine). Residues 735–754 (PEGATDGSPQPRLPASGGPG) form a disordered region.

This sequence belongs to the glycosyl hydrolase 3 family.

Its subcellular location is the secreted. The enzyme catalyses Hydrolysis of terminal, non-reducing beta-D-glucosyl residues with release of beta-D-glucose.. It participates in glycan metabolism; cellulose degradation. Beta-glucosidases are one of a number of cellulolytic enzymes involved in the degradation of cellulosic biomass. Catalyzes the last step releasing glucose from the inhibitory cellobiose. The polypeptide is Probable beta-glucosidase A (bglA) (Aspergillus terreus).